A 660-amino-acid chain; its full sequence is Bifunctional polymyxin resistance protein ArnA (660 aa).

A formyltransferase ArnAFT region spans residues 1–304; sequence MKTVVFAYHD…TLGLVQGSRL (304 aa). 86–88 contributes to the (6R)-10-formyltetrahydrofolate binding site; that stretch reads HLI. Histidine 104 serves as the catalytic Proton donor; for formyltransferase activity. Residues arginine 114 and 136-140 each bind (6R)-10-formyltetrahydrofolate; that span reads VKRAD. Residues 314–660 form a dehydrogenase ArnADH region; that stretch reads RRTRVLILGV…RTVDLTDKPS (347 aa). NAD(+) is bound by residues aspartate 347 and 368–369; that span reads DI. Residues alanine 393, tyrosine 398, and 432-433 contribute to the UDP-alpha-D-glucuronate site; that span reads TS. The Proton acceptor; for decarboxylase activity role is filled by glutamate 434. Residues arginine 460, asparagine 492, 526–535, and tyrosine 613 each bind UDP-alpha-D-glucuronate; that span reads KLIDGGKQKR. Arginine 619 serves as the catalytic Proton donor; for decarboxylase activity.

In the N-terminal section; belongs to the Fmt family. UDP-L-Ara4N formyltransferase subfamily. This sequence in the C-terminal section; belongs to the NAD(P)-dependent epimerase/dehydratase family. UDP-glucuronic acid decarboxylase subfamily. In terms of assembly, homohexamer, formed by a dimer of trimers.

It carries out the reaction UDP-alpha-D-glucuronate + NAD(+) = UDP-beta-L-threo-pentopyranos-4-ulose + CO2 + NADH. The catalysed reaction is UDP-4-amino-4-deoxy-beta-L-arabinose + (6R)-10-formyltetrahydrofolate = UDP-4-deoxy-4-formamido-beta-L-arabinose + (6S)-5,6,7,8-tetrahydrofolate + H(+). It participates in nucleotide-sugar biosynthesis; UDP-4-deoxy-4-formamido-beta-L-arabinose biosynthesis; UDP-4-deoxy-4-formamido-beta-L-arabinose from UDP-alpha-D-glucuronate: step 1/3. It functions in the pathway nucleotide-sugar biosynthesis; UDP-4-deoxy-4-formamido-beta-L-arabinose biosynthesis; UDP-4-deoxy-4-formamido-beta-L-arabinose from UDP-alpha-D-glucuronate: step 3/3. The protein operates within bacterial outer membrane biogenesis; lipopolysaccharide biosynthesis. In terms of biological role, bifunctional enzyme that catalyzes the oxidative decarboxylation of UDP-glucuronic acid (UDP-GlcUA) to UDP-4-keto-arabinose (UDP-Ara4O) and the addition of a formyl group to UDP-4-amino-4-deoxy-L-arabinose (UDP-L-Ara4N) to form UDP-L-4-formamido-arabinose (UDP-L-Ara4FN). The modified arabinose is attached to lipid A and is required for resistance to polymyxin and cationic antimicrobial peptides. In Escherichia coli O127:H6 (strain E2348/69 / EPEC), this protein is Bifunctional polymyxin resistance protein ArnA.